Here is a 572-residue protein sequence, read N- to C-terminus: Hemagglutinin-neuraminidase (572 aa).

Topologically, residues M1–K31 are intravirion. Residues I32–L52 traverse the membrane as a helical segment. At I53–S572 the chain is on the virion surface side. 2 cysteine pairs are disulfide-bonded: C190-C214 and C256-C269. The tract at residues N252–S257 is involved in neuraminidase activity. N308 and N351 each carry an N-linked (GlcNAc...) asparagine; by host glycan. Disulfide bonds link C355/C469 and C463/C473. N-linked (GlcNAc...) asparagine; by host glycosylation is present at N523. A disulfide bond links C535 and C544.

It belongs to the paramyxoviruses hemagglutinin-neuraminidase family. As to quaternary structure, homotetramer; composed of disulfide-linked homodimers. Interacts with F protein trimer.

It localises to the virion membrane. The protein resides in the host cell membrane. The enzyme catalyses Hydrolysis of alpha-(2-&gt;3)-, alpha-(2-&gt;6)-, alpha-(2-&gt;8)- glycosidic linkages of terminal sialic acid residues in oligosaccharides, glycoproteins, glycolipids, colominic acid and synthetic substrates.. Functionally, attaches the virus to sialic acid-containing cell receptors and thereby initiating infection. Binding of HN protein to the receptor induces a conformational change that allows the F protein to trigger virion/cell membranes fusion. Its function is as follows. Neuraminidase activity ensures the efficient spread of the virus by dissociating the mature virions from the neuraminic acid containing glycoproteins. This chain is Hemagglutinin-neuraminidase (HN), found in Homo sapiens (Human).